Consider the following 347-residue polypeptide: NADH-ubiquinone oxidoreductase chain 2 (347 aa).

The next 11 helical transmembrane spans lie at 5–22 (ILITITSTVVLGTMIVLF), 26–45 (WFMIWVGFEMNMLAIIPILM), 60–80 (FLTQATASMLLMLSIIINLLC), 96–116 (TMITIALTMKLGLSPFHFWVP), 122–142 (ISLSSGMILLTWQKIAPLSIL), 153–173 (LLLMMAITSMLVGGWGGLNQT), 178–198 (ILAYSSITHMGWMAAIMVYNP), 200–220 (LAILNLTIYIMMTLGTFMLFM), 237–257 (FPLMAPLILMLMLSLGGLPPL), 274–294 (DMIIMPTLMAITALLNLYFYT), and 325–345 (LLAPLIVTSTMLLPLTPMLAA).

Belongs to the complex I subunit 2 family. In terms of assembly, core subunit of respiratory chain NADH dehydrogenase (Complex I) which is composed of 45 different subunits. Interacts with TMEM242.

It localises to the mitochondrion inner membrane. It catalyses the reaction a ubiquinone + NADH + 5 H(+)(in) = a ubiquinol + NAD(+) + 4 H(+)(out). Its function is as follows. Core subunit of the mitochondrial membrane respiratory chain NADH dehydrogenase (Complex I) which catalyzes electron transfer from NADH through the respiratory chain, using ubiquinone as an electron acceptor. Essential for the catalytic activity and assembly of complex I. This Ailuropoda melanoleuca (Giant panda) protein is NADH-ubiquinone oxidoreductase chain 2.